The primary structure comprises 365 residues: Phosphoserine aminotransferase (365 aa).

Arg42 lines the L-glutamate pocket. Residues 76 to 77, Trp102, Thr156, Asp175, and Gln198 contribute to the pyridoxal 5'-phosphate site; that span reads GR. At Lys199 the chain carries N6-(pyridoxal phosphate)lysine. A pyridoxal 5'-phosphate-binding site is contributed by 240 to 241; that stretch reads NT.

Belongs to the class-V pyridoxal-phosphate-dependent aminotransferase family. SerC subfamily. As to quaternary structure, homodimer. Requires pyridoxal 5'-phosphate as cofactor.

It localises to the cytoplasm. The enzyme catalyses O-phospho-L-serine + 2-oxoglutarate = 3-phosphooxypyruvate + L-glutamate. It catalyses the reaction 4-(phosphooxy)-L-threonine + 2-oxoglutarate = (R)-3-hydroxy-2-oxo-4-phosphooxybutanoate + L-glutamate. The protein operates within amino-acid biosynthesis; L-serine biosynthesis; L-serine from 3-phospho-D-glycerate: step 2/3. It participates in cofactor biosynthesis; pyridoxine 5'-phosphate biosynthesis; pyridoxine 5'-phosphate from D-erythrose 4-phosphate: step 3/5. In terms of biological role, catalyzes the reversible conversion of 3-phosphohydroxypyruvate to phosphoserine and of 3-hydroxy-2-oxo-4-phosphonooxybutanoate to phosphohydroxythreonine. The sequence is that of Phosphoserine aminotransferase from Shewanella oneidensis (strain ATCC 700550 / JCM 31522 / CIP 106686 / LMG 19005 / NCIMB 14063 / MR-1).